The chain runs to 179 residues: Shikimate kinase (179 aa).

ATP is bound at residue G12–K17. Residue S16 coordinates Mg(2+). Substrate contacts are provided by D34, R61, and G83. ATP is bound at residue R131. R147 provides a ligand contact to substrate.

Belongs to the shikimate kinase family. As to quaternary structure, monomer. Mg(2+) serves as cofactor.

The protein localises to the cytoplasm. It catalyses the reaction shikimate + ATP = 3-phosphoshikimate + ADP + H(+). The protein operates within metabolic intermediate biosynthesis; chorismate biosynthesis; chorismate from D-erythrose 4-phosphate and phosphoenolpyruvate: step 5/7. Its function is as follows. Catalyzes the specific phosphorylation of the 3-hydroxyl group of shikimic acid using ATP as a cosubstrate. The sequence is that of Shikimate kinase from Leptospira borgpetersenii serovar Hardjo-bovis (strain JB197).